The following is a 324-amino-acid chain: tRNA uridine(34) hydroxylase (324 aa).

A Rhodanese domain is found at 127–221; it reads QQEETIVIDA…YGKDPEVQGE (95 aa). Cysteine 181 acts as the Cysteine persulfide intermediate in catalysis.

Belongs to the TrhO family.

It carries out the reaction uridine(34) in tRNA + AH2 + O2 = 5-hydroxyuridine(34) in tRNA + A + H2O. Catalyzes oxygen-dependent 5-hydroxyuridine (ho5U) modification at position 34 in tRNAs. The sequence is that of tRNA uridine(34) hydroxylase from Bacillus cytotoxicus (strain DSM 22905 / CIP 110041 / 391-98 / NVH 391-98).